The following is a 305-amino-acid chain: D-alanine--D-alanine ligase (305 aa).

The 193-residue stretch at 107–299 folds into the ATP-grasp domain; that stretch reads KKMLCYHGIA…FDELVERILA (193 aa). ATP is bound at residue 134–186; it reads PDYPLVVKPAREGSTIGISIVHDEQELAAGLEEAFRHDDLVLVEQFIAGAEVT. Mg(2+) contacts are provided by D254, E266, and N268.

It belongs to the D-alanine--D-alanine ligase family. Mg(2+) serves as cofactor. Mn(2+) is required as a cofactor.

The protein resides in the cytoplasm. The enzyme catalyses 2 D-alanine + ATP = D-alanyl-D-alanine + ADP + phosphate + H(+). It functions in the pathway cell wall biogenesis; peptidoglycan biosynthesis. Cell wall formation. This chain is D-alanine--D-alanine ligase, found in Syntrophotalea carbinolica (strain DSM 2380 / NBRC 103641 / GraBd1) (Pelobacter carbinolicus).